A 1242-amino-acid chain; its full sequence is MFPYPTLNYPPMAPVNPMAYRDPNPPRRRWRPFRPPLAAQIEDLRRSIANLTFKQRAPNPPAGPPAKRKKPAPKPKPAAPKKKRQPPPAKKQKRKQKPGKRQRMCMKLESDKTFPIMLNGQVNGYACVVGGRVFKPLHVEGKIDNEQLAAIKLKKASIYDLEYGDVPQCMKSDTLQYTSEKPPGFYNWHHGAVQYENNRFTVPRGVGGKGDSGRPILDNRGRVVAIVLGGANEGSRTALSVVTWNQKGVTVKDTPEGSEPWSLTTVMCVLANITFPCDQPPCMPCCYEKNPHETLSMLEQNYDSQAYDLLLDAAVKCNGRRTRRDLETHFTQYKLARPYIADCSNCGHGRCDSPIAIEDIRGDAHAGYIRIQTSAMFGLKSDGVDLAYMSFMNGKTLKAIKIEHLYARTSAPCSLVSYHGYYILAQCPPGDTVTVGFQDGAIKHMCTIAHKVEFKPVGREKYRHPPEHGVELPCTKYTHKRADQGHYVEMHQPGLVADHSLLSMSSTKVKITVPSGSQVKYYCKCPDVKEGTTGSDYTTACTDLKQCRAYLIDNKKWVYNSGKLPRGEGETFKGKLHVPFVPVTSKCTATLAPEPLVEHKHRSLVLHLHPEHPTLLTTRALGSNARPTRQWIEQPTTVNFTVTGEGFEYTWGNHPPKRVWAQESGEGNPHGWPHEIVIYYYNRYPMTTVIGLCTCVAIIMVSCVTSVWLLCRTRNLCITPYRLAPNAQVPILLAVLCCVKPTRADDTLQVLNYLWNNNQNFFWMQTLIPLAALIVCMRMLRCLLCCGPAFLLVCGALGAAAYEHAAVMPNKVGIPYKALVERPGYAPVHLQIQLVTTKIIPSANLEYITCKYKTKVPSPVVKCCGSTQCSAKSLPDYQCQVFTGVYPFMWGGAYCFCDTENTQMSEVYIERAEECSVDQAKAYKVHTGTVQAVVNITYGSVSWRSADVYVNGETPAKIGDAKLTIGPLSSAWSPFDSKVVVYGHEVYNYDFPEYGTGKAGSFGDLQSRTLTSNDLYANTNLKLQRPQPGVVHTPYTQAPSGFERWKKDRGAPLNDIAPFGCTIALDPLRAENCAVGNIPLSIDIPDAAFTRIAETPTVSDLECKVTECTYASDFGGIATISYKASKAGNCPIHSPSGIAVIKENDVTLADSGAFTFHFSTASIHPAFKMQVCTSVVTCKGDCKPPKDHIVDYPAQHTETYTSAVSATAWSWLKVLVGSTSAFIVLGLIATAVVALVLFTHRH.

A necessary for nucleocapsid assembly and virus assembly region spans residues 1–36; that stretch reads MFPYPTLNYPPMAPVNPMAYRDPNPPRRRWRPFRPP. Positions 1 to 104 are disordered; it reads MFPYPTLNYP…KQKPGKRQRM (104 aa). Residues 37-70 form a host transcription inhibition region; that stretch reads LAAQIEDLRRSIANLTFKQRAPNPPAGPPAKRKK. The short motif at 44 to 51 is the Supraphysiological nuclear export signal element; that stretch reads LRRSIANL. Basic residues predominate over residues 66-104; it reads AKRKKPAPKPKPAAPKKKRQPPPAKKQKRKQKPGKRQRM. The Nuclear localization signal signature appears at 67-70; it reads KRKK. Positions 83–113 are binding to the viral RNA; it reads KRQPPPAKKQKRKQKPGKRQRMCMKLESDKT. Residues 98-112 form a ribosome-binding region; that stretch reads PGKRQRMCMKLESDK. Position 110 is a phosphoserine (serine 110). The Peptidase S3 domain occupies 112-261; it reads KTFPIMLNGQ…KDTPEGSEPW (150 aa). Threonine 113 carries the phosphothreonine modification. Catalysis depends on charge relay system residues histidine 138, aspartate 160, and serine 212. The functions as an uncleaved signal peptide for the precursor of protein E3/E2 stretch occupies residues 262–273; the sequence is SLTTVMCVLANI. An N-linked (GlcNAc...) asparagine; by host glycan is attached at asparagine 272. The Extracellular segment spans residues 325 to 688; sequence DLETHFTQYK…YYYNRYPMTT (364 aa). The chain crosses the membrane as a helical span at residues 689-709; that stretch reads VIGLCTCVAIIMVSCVTSVWL. The Cytoplasmic segment spans residues 710–744; that stretch reads LCRTRNLCITPYRLAPNAQVPILLAVLCCVKPTRA. Residues cysteine 717, cysteine 737, and cysteine 738 are each lipidated (S-palmitoyl cysteine; by host). The tract at residues 717–737 is transient transmembrane before p62-6K protein processing; the sequence is CITPYRLAPNAQVPILLAVLC. Topologically, residues 745-759 are extracellular; it reads DDTLQVLNYLWNNNQ. 2 helical membrane-spanning segments follow: residues 760-780 and 781-801; these read NFFW…MRML and RCLL…GAAA. Residues 802–1218 are Extracellular-facing; the sequence is YEHAAVMPNK…WSWLKVLVGS (417 aa). Intrachain disulfides connect cysteine 850–cysteine 915, cysteine 863–cysteine 895, cysteine 864–cysteine 897, cysteine 869–cysteine 879, cysteine 1061–cysteine 1073, cysteine 1103–cysteine 1178, cysteine 1108–cysteine 1182, and cysteine 1130–cysteine 1172. The segment at 885-902 is E1 fusion peptide loop; it reads VYPFMWGGAYCFCDTENT. The chain crosses the membrane as a helical span at residues 1219–1239; the sequence is TSAFIVLGLIATAVVALVLFT. The Cytoplasmic portion of the chain corresponds to 1240 to 1242; that stretch reads HRH.

In terms of assembly, part of a tetrameric complex composed of host CRM1, host importin alpha/beta dimer and the viral capsid; this complex blocks the receptor-mediated transport through the nuclear pore. Interacts with host phosphatase PPP1CA; this interaction dephosphorylates the capsid protein, which increases its ability to bind to the viral genome. Interacts with host karyopherin KPNA4; this interaction allows the nuclear import of the viral capsid protein. Interacts with spike glycoprotein E2. Interacts with host IRAK1; the interaction leads to inhibition of IRAK1-dependent signaling. The precursor of protein E3/E2 and E1 form a heterodimer shortly after synthesis. As to quaternary structure, the precursor of protein E3/E2 and E1 form a heterodimer shortly after synthesis. Processing of the precursor of protein E3/E2 into E2 and E3 results in a heterodimer of the spike glycoproteins E2 and E1. Spike at virion surface are constituted of three E2-E1 heterodimers. After target cell attachment and endocytosis, E1 change conformation to form homotrimers. Interacts with 6K protein. In terms of assembly, processing of the precursor of protein E3/E2 into E2 and E3 results in a heterodimer of the spike glycoproteins E2 and E1. Spike at virion surface are constituted of three E2-E1 heterodimers. Interacts with 6K protein. Interacts with spike glycoprotein E1. Interacts with spike glycoprotein E2. Post-translationally, structural polyprotein: Specific enzymatic cleavages in vivo yield mature proteins. Capsid protein is auto-cleaved during polyprotein translation, unmasking a signal peptide at the N-terminus of the precursor of E3/E2. The remaining polyprotein is then targeted to the host endoplasmic reticulum, where host signal peptidase cleaves it into pE2, 6K and E1 proteins. pE2 is further processed to mature E3 and E2 by host furin in trans-Golgi vesicle. Phosphorylated on serine and threonine residues. In terms of processing, palmitoylated via thioester bonds. These palmitoylations may induce disruption of the C-terminus transmembrane. This would result in the reorientation of E2 C-terminus from lumenal to cytoplasmic side. Post-translationally, N-glycosylated. Palmitoylated via thioester bonds.

It is found in the virion. The protein localises to the host cytoplasm. The protein resides in the host cell membrane. Its subcellular location is the host nucleus. It localises to the virion membrane. The catalysed reaction is Autocatalytic release of the core protein from the N-terminus of the togavirus structural polyprotein by hydrolysis of a -Trp-|-Ser- bond.. Functionally, forms an icosahedral capsid with a T=4 symmetry composed of 240 copies of the capsid protein surrounded by a lipid membrane through which penetrate 80 spikes composed of trimers of E1-E2 heterodimers. The capsid protein binds to the viral RNA genome at a site adjacent to a ribosome binding site for viral genome translation following genome release. Possesses a protease activity that results in its autocatalytic cleavage from the nascent structural protein. Following its self-cleavage, the capsid protein transiently associates with ribosomes, and within several minutes the protein binds to viral RNA and rapidly assembles into icosahedric core particles. The resulting nucleocapsid eventually associates with the cytoplasmic domain of the spike glycoprotein E2 at the cell membrane, leading to budding and formation of mature virions. In case of infection, new virions attach to target cells and after clathrin-mediated endocytosis their membrane fuses with the host endosomal membrane. This leads to the release of the nucleocapsid into the cytoplasm, followed by an uncoating event necessary for the genomic RNA to become accessible. The uncoating might be triggered by the interaction of capsid proteins with ribosomes. Binding of ribosomes would release the genomic RNA since the same region is genomic RNA-binding and ribosome-binding. Specifically inhibits interleukin-1 receptor-associated kinase 1/IRAK1-dependent signaling during viral entry, representing a means by which the alphaviruses may evade innate immune detection and activation prior to viral gene expression. Inhibits host transcription. Forms a tetrameric complex with XPO1/CRM1 and the nuclear import receptor importin. This complex blocks the central channel of host nuclear pores thereby inhibiting the receptor-mediated nuclear transport and thus the host mRNA and rRNA transcription. The inhibition of transcription is linked to a cytopathic effect on the host cell. Its function is as follows. Provides the signal sequence for the translocation of the precursor of protein E3/E2 to the host endoplasmic reticulum. Furin-cleaved E3 remains associated with spike glycoprotein E1 and mediates pH protection of the latter during the transport via the secretory pathway. After virion release from the host cell, the assembly protein E3 is gradually released in the extracellular space. In terms of biological role, plays a role in viral attachment to target host cell, by binding to the cell receptor. Synthesized as a p62 precursor which is processed by furin at the cell membrane just before virion budding, giving rise to E2-E1 heterodimer. The p62-E1 heterodimer is stable, whereas E2-E1 is unstable and dissociate at low pH. p62 is processed at the last step, presumably to avoid E1 fusion activation before its final export to cell surface. E2 C-terminus contains a transitory transmembrane that would be disrupted by palmitoylation, resulting in reorientation of the C-terminal tail from lumenal to cytoplasmic side. This step is critical since E2 C-terminus is involved in budding by interacting with capsid proteins. This release of E2 C-terminus in cytoplasm occurs lately in protein export, and precludes premature assembly of particles at the endoplasmic reticulum membrane. Constitutive membrane protein involved in virus glycoprotein processing, cell permeabilization, and the budding of viral particles. Disrupts the calcium homeostasis of the cell, probably at the endoplasmic reticulum level. This leads to cytoplasmic calcium elevation. Because of its lipophilic properties, the 6K protein is postulated to influence the selection of lipids that interact with the transmembrane domains of the glycoproteins, which, in turn, affects the deformability of the bilayer required for the extreme curvature that occurs as budding proceeds. Present in low amount in virions, about 3% compared to viral glycoproteins. Functionally, class II viral fusion protein. Fusion activity is inactive as long as E1 is bound to E2 in mature virion. After virus attachment to target cell and endocytosis, acidification of the endosome would induce dissociation of E1/E2 heterodimer and concomitant trimerization of the E1 subunits. This E1 trimer is fusion active, and promotes release of viral nucleocapsid in cytoplasm after endosome and viral membrane fusion. Efficient fusion requires the presence of cholesterol and sphingolipid in the target membrane. Fusion is optimal at levels of about 1 molecule of cholesterol per 2 molecules of phospholipids, and is specific for sterols containing a 3-beta-hydroxyl group. In Aedes (Human), this protein is Structural polyprotein.